A 139-amino-acid chain; its full sequence is D-ribose pyranase (139 aa).

H20 functions as the Proton donor in the catalytic mechanism. Residues D28, H106, and 128 to 130 contribute to the substrate site; that span reads YAN.

This sequence belongs to the RbsD / FucU family. RbsD subfamily. Homodecamer.

It localises to the cytoplasm. It carries out the reaction beta-D-ribopyranose = beta-D-ribofuranose. Its pathway is carbohydrate metabolism; D-ribose degradation; D-ribose 5-phosphate from beta-D-ribopyranose: step 1/2. Catalyzes the interconversion of beta-pyran and beta-furan forms of D-ribose. The polypeptide is D-ribose pyranase (Haemophilus influenzae (strain 86-028NP)).